The primary structure comprises 431 residues: Glutamyl-tRNA(Gln) amidotransferase subunit A (431 aa).

Catalysis depends on charge relay system residues Lys-55 and Ser-130. Ser-154 (acyl-ester intermediate) is an active-site residue.

Belongs to the amidase family. GatA subfamily. In terms of assembly, heterotrimer of A, B and C subunits.

It carries out the reaction L-glutamyl-tRNA(Gln) + L-glutamine + ATP + H2O = L-glutaminyl-tRNA(Gln) + L-glutamate + ADP + phosphate + H(+). Functionally, allows the formation of correctly charged Gln-tRNA(Gln) through the transamidation of misacylated Glu-tRNA(Gln) in organisms which lack glutaminyl-tRNA synthetase. The reaction takes place in the presence of glutamine and ATP through an activated gamma-phospho-Glu-tRNA(Gln). In Methanococcus maripaludis (strain C5 / ATCC BAA-1333), this protein is Glutamyl-tRNA(Gln) amidotransferase subunit A.